The sequence spans 141 residues: Large ribosomal subunit protein uL11 (141 aa).

It belongs to the universal ribosomal protein uL11 family. In terms of assembly, part of the ribosomal stalk of the 50S ribosomal subunit. Interacts with L10 and the large rRNA to form the base of the stalk. L10 forms an elongated spine to which L12 dimers bind in a sequential fashion forming a multimeric L10(L12)X complex. In terms of processing, one or more lysine residues are methylated.

Functionally, forms part of the ribosomal stalk which helps the ribosome interact with GTP-bound translation factors. This Lactobacillus acidophilus (strain ATCC 700396 / NCK56 / N2 / NCFM) protein is Large ribosomal subunit protein uL11.